The chain runs to 469 residues: GDNF family receptor alpha-1 (469 aa).

Positions 1 to 27 (MFLALLYLALPLADVLLSAEVSGLPGG) are cleaved as a signal peptide. Tandem repeats lie at residues 28 to 116 (DRLD…LQGN), 149 to 237 (KGNN…YEDR), and 238 to 341 (EKPN…KNAI). An intrachain disulfide couples Cys-39 to Cys-45. N-linked (GlcNAc...) asparagine glycosylation is found at Asn-62 and Asn-163. 10 cysteine pairs are disulfide-bonded: Cys-153/Cys-213, Cys-160/Cys-166, Cys-177/Cys-191, Cys-186/Cys-232, Cys-215/Cys-220, Cys-242/Cys-312, Cys-249/Cys-255, Cys-266/Cys-284, Cys-276/Cys-336, and Cys-314/Cys-324. Asn-346 and Asn-405 each carry an N-linked (GlcNAc...) asparagine glycan. The GPI-anchor amidated serine moiety is linked to residue Ser-430. A propeptide spans 431 to 469 (HISSENSFALPTSFYPSTPLILMTIALSLFLFLSSSVVL) (removed in mature form).

The protein belongs to the GDNFR family. In terms of assembly, interacts with GDNF ligand and RET: forms a 2:2:2 ternary complex composed of GDNF ligand, GFRA1 and RET receptor.

Its subcellular location is the cell membrane. It is found in the golgi apparatus. The protein resides in the trans-Golgi network. It localises to the endosome. The protein localises to the multivesicular body. Coreceptor for GDNF, a neurotrophic factor that enhances survival and morphological differentiation of dopaminergic neurons and increases their high-affinity dopamine uptake. GDNF-binding leads to autophosphorylation and activation of the RET receptor. This chain is GDNF family receptor alpha-1 (GFRA1), found in Gallus gallus (Chicken).